The sequence spans 324 residues: Mevalonate-3-kinase (324 aa).

Leucine 19 lines the substrate pocket. 109 to 112 (SGSS) contributes to the ATP binding site. Glutamate 145 and arginine 149 together coordinate substrate. ATP-binding residues include arginine 190 and serine 193.

Belongs to the GHMP kinase family. Homodimer.

It carries out the reaction (R)-mevalonate + ATP = (R)-3-phosphomevalonate + ADP + H(+). It functions in the pathway isoprenoid biosynthesis; isopentenyl diphosphate biosynthesis via mevalonate pathway. Catalyzes the phosphorylation of mevalonate (MVA) to yield mevalonate-3-phosphate. Functions in an alternative mevalonate pathway, which passes through mevalonate 3-phosphate rather than mevalonate 5-phosphate. Also able to catalyze the formation of isobutene via the conversion of 3-hydroxyisovalerate (3-HIV) to an unstable 3-phosphate intermediate that undergoes a spontaneous decarboxylation. This chain is Mevalonate-3-kinase, found in Picrophilus torridus (strain ATCC 700027 / DSM 9790 / JCM 10055 / NBRC 100828 / KAW 2/3).